Here is a 100-residue protein sequence, read N- to C-terminus: Osteocalcin (100 aa).

The signal sequence occupies residues 1–23; it reads MRTPMLLALLALATLCLAGRADA. A propeptide spanning residues 24-51 is cleaved from the precursor; the sequence is KPGDAESGKGAAFVSKQEGSEVVKRLRR. The Gla domain maps to 52–98; the sequence is YLDHWLGAPAPYPDPLEPKREVCELNPDCDELADHIGFQEAYRRFYG. A 4-hydroxyproline modification is found at Pro60. Ca(2+)-binding residues include Glu68, Glu72, Glu75, and Asp81. 3 positions are modified to 4-carboxyglutamate: Glu68, Glu72, and Glu75. Cys74 and Cys80 are disulfide-bonded.

This sequence belongs to the osteocalcin/matrix Gla protein family. Post-translationally, gamma-carboxyglutamate residues are formed by vitamin K dependent carboxylation by GGCX. These residues are essential for the binding of calcium. Decarboxylation promotes the hormone activity.

The protein localises to the secreted. The carboxylated form is one of the main organic components of the bone matrix, which constitutes 1-2% of the total bone protein. It acts as a negative regulator of bone formation and is required to limit bone formation without impairing bone resorption or mineralization. The carboxylated form binds strongly to apatite and calcium. Its function is as follows. The uncarboxylated form acts as a hormone secreted by osteoblasts, which regulates different cellular processes, such as energy metabolism, male fertility and brain development. Regulates of energy metabolism by acting as a hormone favoring pancreatic beta-cell proliferation, insulin secretion and sensitivity and energy expenditure. Uncarboxylated osteocalcin hormone also promotes testosterone production in the testes: acts as a ligand for G protein-coupled receptor GPRC6A at the surface of Leydig cells, initiating a signaling response that promotes the expression of enzymes required for testosterone synthesis in a CREB-dependent manner. Also acts as a regulator of brain development: osteocalcin hormone crosses the blood-brain barrier and acts as a ligand for GPR158 on neurons, initiating a signaling response that prevents neuronal apoptosis in the hippocampus, favors the synthesis of all monoamine neurotransmitters and inhibits that of gamma-aminobutyric acid (GABA). Osteocalcin also crosses the placenta during pregnancy and maternal osteocalcin is required for fetal brain development. The chain is Osteocalcin (BGLAP) from Bos taurus (Bovine).